The sequence spans 156 residues: ATP synthase subunit b (156 aa).

A helical transmembrane segment spans residues V12–A32.

This sequence belongs to the ATPase B chain family. In terms of assembly, F-type ATPases have 2 components, F(1) - the catalytic core - and F(0) - the membrane proton channel. F(1) has five subunits: alpha(3), beta(3), gamma(1), delta(1), epsilon(1). F(0) has three main subunits: a(1), b(2) and c(10-14). The alpha and beta chains form an alternating ring which encloses part of the gamma chain. F(1) is attached to F(0) by a central stalk formed by the gamma and epsilon chains, while a peripheral stalk is formed by the delta and b chains.

Its subcellular location is the cell inner membrane. In terms of biological role, f(1)F(0) ATP synthase produces ATP from ADP in the presence of a proton or sodium gradient. F-type ATPases consist of two structural domains, F(1) containing the extramembraneous catalytic core and F(0) containing the membrane proton channel, linked together by a central stalk and a peripheral stalk. During catalysis, ATP synthesis in the catalytic domain of F(1) is coupled via a rotary mechanism of the central stalk subunits to proton translocation. Functionally, component of the F(0) channel, it forms part of the peripheral stalk, linking F(1) to F(0). This Pseudomonas putida (strain GB-1) protein is ATP synthase subunit b.